Consider the following 150-residue polypeptide: Nitric oxide reductase subunit C (150 aa).

The chain crosses the membrane as a helical; Signal-anchor span at residues 13–29 (IFYGGSLFFFLLFAALT). 3 residues coordinate heme c: Cys62, Cys65, and His66.

As to quaternary structure, heterodimer of cytochromes b (large subunit) and c (small subunit).

It localises to the cell membrane. In terms of biological role, component of the anaerobic respiratory chain that transforms nitrate to dinitrogen (denitrification). The sequence is that of Nitric oxide reductase subunit C (norC) from Halomonas halodenitrificans (Paracoccus halodenitrificans).